The sequence spans 378 residues: tRNA N(3)-cytidine methyltransferase METTL2 (378 aa).

S-adenosyl-L-methionine contacts are provided by Trp-78, Tyr-82, Gly-188, Asp-213, Asp-239, Leu-240, and Ile-260.

The protein belongs to the methyltransferase superfamily. METL family. As to quaternary structure, monomer. Interacts with DALRD3.

It localises to the cytoplasm. The enzyme catalyses cytidine(32) in tRNA(Thr) + S-adenosyl-L-methionine = N(3)-methylcytidine(32) in tRNA(Thr) + S-adenosyl-L-homocysteine + H(+). The catalysed reaction is cytidine(32) in tRNA(Arg)(CCU) + S-adenosyl-L-methionine = N(3)-methylcytidine(32) in tRNA(Arg)(CCU) + S-adenosyl-L-homocysteine + H(+). Its function is as follows. S-adenosyl-L-methionine-dependent methyltransferase that mediates N(3)-methylcytidine modification of residue 32 of the tRNA anticodon loop of tRNA(Thr)(UGU) and tRNA(Arg)(CCU). N(3)-methylcytidine methylation by METTL2 requires the N6-threonylcarbamoylation of tRNA (t6A37) by the EKC/KEOPS complex as prerequisite. This chain is tRNA N(3)-cytidine methyltransferase METTL2 (METTL2), found in Bos taurus (Bovine).